The primary structure comprises 344 residues: Thioredoxin reductase FGSG_00043 (344 aa).

FAD is bound by residues 12 to 15 (GGPA), 34 to 39 (DSVSYR), His-51, and Ala-121. Residues Cys-165 and Cys-168 are joined by a disulfide bond. FAD contacts are provided by residues Asp-314 and 321–322 (FV).

This sequence belongs to the class-II pyridine nucleotide-disulfide oxidoreductase family. As to quaternary structure, homodimer. FAD serves as cofactor.

Its pathway is mycotoxin biosynthesis. Thioredoxin reductase; part of the gene cluster that mediates the biosynthesis of gramillins A and B, bicyclic lipopeptides that induce cell death in maize leaves but not in wheat leaves. The nonribosomal peptide synthetase GRA1 incorporates respectively a glutamic adic (Glu), a leucine (Leu), a serine (Ser), a hydroxyglutamine (HOGln), a 2-amino decanoic acid, and 2 cysteins (CysB and CysA). The biosynthesis of 2-amino decanoic acid incorporated in gramillins could be initiated by a fatty acid synthase composed of the alpha and beta subunits FGSG_00036 and FGSG_11656. The cytochrome P450 monooxygenase FGSG_15680 could hydroxylate the fatty acid chain. Subsequent oxidation to the ketone by the oxidoreductase FGSG_00048 and transamination by aminotransferase FGSG_00049 could form 2-amino-decanoic acid. On the other hand, FGSG_15680 could also be responsible for the HO-modified glutamine at the gamma-position. Whether hydroxylation occurs on the fully assembled product or on the Gln residue prior to assembly into the gramillins requires further proof. The thioredoxin FGSG_00043 could also be required for the disulfide-bond formation between CysA and CysB. The specific involvement of the remaining proteins from the cluster is more difficult to discern, but could have broader regulatory (FGSG_00040 and FGSG_11657) or enzymatic functions (FGSG_00044 and FGSG_00045). The final C-domain of GRA1 does not possess the expected sequence of a termination CT domain, often implicated in macrocyclization and release of a cyclopeptidein fungal NRPs; and the thioesterase FGSG_00047 may act in concert with the terminal C-domain of GRA1 to catalyze the formation of the macrocyclic anhydride and release of the products. This chain is Thioredoxin reductase FGSG_00043, found in Gibberella zeae (strain ATCC MYA-4620 / CBS 123657 / FGSC 9075 / NRRL 31084 / PH-1) (Wheat head blight fungus).